The sequence spans 461 residues: Divalent metal cation transporter MntH (461 aa).

11 helical membrane passes run 56–76 (AMAF…PGNW), 89–109 (TLLA…SLCA), 132–152 (AMVL…AEVI), 160–180 (LIFG…VFLI), 193–213 (ALVI…LALA), 230–250 (IVTN…TVMP), 285–305 (IALM…AATF), 322–342 (LLAP…ALLC), 378–398 (AIAI…GTGQ), 399–419 (LLIL…FPLV), and 433–453 (SPLW…ALNV).

It belongs to the NRAMP family.

It localises to the cell inner membrane. In terms of biological role, h(+)-stimulated, divalent metal cation uptake system. This is Divalent metal cation transporter MntH from Agrobacterium fabrum (strain C58 / ATCC 33970) (Agrobacterium tumefaciens (strain C58)).